An 86-amino-acid chain; its full sequence is uncharacterized protein (86 aa).

The helical transmembrane segment at 63-85 (VGGRSPSIQNSFFFFFFFFFFFF) threads the bilayer.

The protein localises to the membrane. This is an uncharacterized protein from Dictyostelium discoideum (Social amoeba).